The chain runs to 99 residues: Small ribosomal subunit protein bS20 (99 aa).

Belongs to the bacterial ribosomal protein bS20 family.

Functionally, binds directly to 16S ribosomal RNA. In Cyanothece sp. (strain PCC 7425 / ATCC 29141), this protein is Small ribosomal subunit protein bS20.